A 240-amino-acid chain; its full sequence is Acyl-protein thioesterase 1 (240 aa).

Active-site charge relay system residues include serine 129, aspartate 183, and histidine 219.

The protein belongs to the AB hydrolase superfamily. AB hydrolase 2 family.

The protein resides in the cytoplasm. It localises to the nucleus. It carries out the reaction S-hexadecanoyl-L-cysteinyl-[protein] + H2O = L-cysteinyl-[protein] + hexadecanoate + H(+). Its function is as follows. Hydrolyzes fatty acids from S-acylated cysteine residues in proteins with a strong preference for palmitoylated G-alpha proteins over other acyl substrates. Mediates the deacylation of G-alpha proteins such as GPA1 in vivo, but has weak or no activity toward palmitoylated Ras proteins. Has weak lysophospholipase activity in vitro; however such activity may not exist in vivo. This chain is Acyl-protein thioesterase 1, found in Mycosarcoma maydis (Corn smut fungus).